Consider the following 113-residue polypeptide: Major basic nuclear protein 1 (113 aa).

Residues 1–20 form a disordered region; sequence MAPKMKAAMKAMKAPAMKGK.

It is found in the nucleus. In Crypthecodinium cohnii (Dinoflagellate), this protein is Major basic nuclear protein 1 (HCc1).